Here is a 462-residue protein sequence, read N- to C-terminus: Cysteine--tRNA ligase (462 aa).

Residue cysteine 29 participates in Zn(2+) binding. The 'HIGH' region signature appears at 31 to 41 (PTVYDHAHIGN). Zn(2+)-binding residues include cysteine 214, histidine 239, and glutamate 243. The 'KMSKS' region signature appears at 272–276 (KMSKS). Lysine 275 contributes to the ATP binding site.

Belongs to the class-I aminoacyl-tRNA synthetase family. As to quaternary structure, monomer. Requires Zn(2+) as cofactor.

Its subcellular location is the cytoplasm. It catalyses the reaction tRNA(Cys) + L-cysteine + ATP = L-cysteinyl-tRNA(Cys) + AMP + diphosphate. The protein is Cysteine--tRNA ligase of Azorhizobium caulinodans (strain ATCC 43989 / DSM 5975 / JCM 20966 / LMG 6465 / NBRC 14845 / NCIMB 13405 / ORS 571).